We begin with the raw amino-acid sequence, 286 residues long: NAD kinase (286 aa).

Catalysis depends on Asp-74, which acts as the Proton acceptor. NAD(+) contacts are provided by residues 74–75, 148–149, Asp-178, Ala-186, 189–194, and Gln-244; these read DG, ND, and TAYNLS.

The protein belongs to the NAD kinase family. A divalent metal cation is required as a cofactor.

It localises to the cytoplasm. The catalysed reaction is NAD(+) + ATP = ADP + NADP(+) + H(+). Its function is as follows. Involved in the regulation of the intracellular balance of NAD and NADP, and is a key enzyme in the biosynthesis of NADP. Catalyzes specifically the phosphorylation on 2'-hydroxyl of the adenosine moiety of NAD to yield NADP. This chain is NAD kinase, found in Campylobacter jejuni (strain RM1221).